The chain runs to 220 residues: Phosphatidylserine decarboxylase proenzyme (220 aa).

Ser-188 serves as the catalytic Schiff-base intermediate with substrate; via pyruvic acid. The residue at position 188 (Ser-188) is a Pyruvic acid (Ser); by autocatalysis.

This sequence belongs to the phosphatidylserine decarboxylase family. PSD-A subfamily. Heterodimer of a large membrane-associated beta subunit and a small pyruvoyl-containing alpha subunit. Pyruvate is required as a cofactor. Post-translationally, is synthesized initially as an inactive proenzyme. Formation of the active enzyme involves a self-maturation process in which the active site pyruvoyl group is generated from an internal serine residue via an autocatalytic post-translational modification. Two non-identical subunits are generated from the proenzyme in this reaction, and the pyruvate is formed at the N-terminus of the alpha chain, which is derived from the carboxyl end of the proenzyme. The post-translation cleavage follows an unusual pathway, termed non-hydrolytic serinolysis, in which the side chain hydroxyl group of the serine supplies its oxygen atom to form the C-terminus of the beta chain, while the remainder of the serine residue undergoes an oxidative deamination to produce ammonia and the pyruvoyl prosthetic group on the alpha chain.

The protein localises to the cell membrane. The enzyme catalyses a 1,2-diacyl-sn-glycero-3-phospho-L-serine + H(+) = a 1,2-diacyl-sn-glycero-3-phosphoethanolamine + CO2. It functions in the pathway phospholipid metabolism; phosphatidylethanolamine biosynthesis; phosphatidylethanolamine from CDP-diacylglycerol: step 2/2. Catalyzes the formation of phosphatidylethanolamine (PtdEtn) from phosphatidylserine (PtdSer). In Parabacteroides distasonis (strain ATCC 8503 / DSM 20701 / CIP 104284 / JCM 5825 / NCTC 11152), this protein is Phosphatidylserine decarboxylase proenzyme.